Here is a 327-residue protein sequence, read N- to C-terminus: Olfactory receptor 51T1 (327 aa).

Over 1-27 the chain is Extracellular; sequence MAIFNNTTSSSSNFLLTAFPGLECAHV. Asn5 and Asn6 each carry an N-linked (GlcNAc...) asparagine glycan. Residues 28-48 traverse the membrane as a helical segment; the sequence is WISIPVCCLYTIALLGNSMIF. Over 49-56 the chain is Cytoplasmic; sequence LVIITKRR. Residues 57–77 form a helical membrane-spanning segment; it reads LHKPMYYFLSMLAAVDLCLTI. Residues 78 to 101 are Extracellular-facing; that stretch reads TTLPTVLGVLWFHAREISFKACFI. The helical transmembrane segment at 102–122 threads the bilayer; sequence QMFFVHAFSLLESSVLVAMAF. At 123 to 141 the chain is on the cytoplasmic side; the sequence is DRFVAICNPLNYATILTDR. A helical membrane pass occupies residues 142 to 162; sequence MVLVIGLVICIRPAVFLLPLL. Residues 163 to 198 are Extracellular-facing; that stretch reads VAINTVSFHGGHELSHPFCYHPEVIKYTYSKPWISS. A helical membrane pass occupies residues 199-219; it reads FWGLFLQLYLNGTDVLFILFS. At 220–239 the chain is on the cytoplasmic side; it reads YVLILRTVLGIVARKKQQKA. A helical membrane pass occupies residues 240–260; that stretch reads LSTCVCHICAVTIFYVPLISL. Residues 261–275 are Extracellular-facing; it reads SLAHRLFHSTPRVLC. A helical transmembrane segment spans residues 276–296; it reads STLANIYLLLPPVLNPIIYSL. Residues 297-327 are Cytoplasmic-facing; sequence KTKTIRQAMFQLLQSKGSWGFNVRGLRGRWD.

The protein belongs to the G-protein coupled receptor 1 family.

It is found in the cell membrane. Its function is as follows. Odorant receptor. This chain is Olfactory receptor 51T1 (OR51T1), found in Homo sapiens (Human).